A 101-amino-acid polypeptide reads, in one-letter code: ATP synthase subunit c (101 aa).

The next 2 helical transmembrane spans lie at 31-51 and 81-101; these read AFAYLGAGLAMIGVIGVGAGQ and AISETSSIYALLVALILIFVG.

The protein belongs to the ATPase C chain family. As to quaternary structure, F-type ATPases have 2 components, F(1) - the catalytic core - and F(0) - the membrane proton channel. F(1) has five subunits: alpha(3), beta(3), gamma(1), delta(1), epsilon(1). F(0) has three main subunits: a(1), b(2) and c(10-14). The alpha and beta chains form an alternating ring which encloses part of the gamma chain. F(1) is attached to F(0) by a central stalk formed by the gamma and epsilon chains, while a peripheral stalk is formed by the delta and b chains.

It is found in the cell membrane. Its function is as follows. F(1)F(0) ATP synthase produces ATP from ADP in the presence of a proton or sodium gradient. F-type ATPases consist of two structural domains, F(1) containing the extramembraneous catalytic core and F(0) containing the membrane proton channel, linked together by a central stalk and a peripheral stalk. During catalysis, ATP synthesis in the catalytic domain of F(1) is coupled via a rotary mechanism of the central stalk subunits to proton translocation. In terms of biological role, key component of the F(0) channel; it plays a direct role in translocation across the membrane. A homomeric c-ring of between 10-14 subunits forms the central stalk rotor element with the F(1) delta and epsilon subunits. This Mesomycoplasma hyopneumoniae (strain J / ATCC 25934 / NCTC 10110) (Mycoplasma hyopneumoniae) protein is ATP synthase subunit c.